The primary structure comprises 343 residues: Uroporphyrinogen decarboxylase (343 aa).

Residues 25 to 29 (RQAGR), D75, Y152, S207, and H323 contribute to the substrate site.

It belongs to the uroporphyrinogen decarboxylase family. As to quaternary structure, homodimer.

It is found in the cytoplasm. The catalysed reaction is uroporphyrinogen III + 4 H(+) = coproporphyrinogen III + 4 CO2. It functions in the pathway porphyrin-containing compound metabolism; protoporphyrin-IX biosynthesis; coproporphyrinogen-III from 5-aminolevulinate: step 4/4. Functionally, catalyzes the decarboxylation of four acetate groups of uroporphyrinogen-III to yield coproporphyrinogen-III. This is Uroporphyrinogen decarboxylase from Jannaschia sp. (strain CCS1).